The sequence spans 121 residues: Ribosome-binding factor A (121 aa).

It belongs to the RbfA family. Monomer. Binds 30S ribosomal subunits, but not 50S ribosomal subunits or 70S ribosomes.

Its subcellular location is the cytoplasm. In terms of biological role, one of several proteins that assist in the late maturation steps of the functional core of the 30S ribosomal subunit. Associates with free 30S ribosomal subunits (but not with 30S subunits that are part of 70S ribosomes or polysomes). Required for efficient processing of 16S rRNA. May interact with the 5'-terminal helix region of 16S rRNA. The protein is Ribosome-binding factor A of Brevibacillus brevis (strain 47 / JCM 6285 / NBRC 100599).